Consider the following 37-residue polypeptide: Large ribosomal subunit protein bL36 (37 aa).

Belongs to the bacterial ribosomal protein bL36 family.

The protein is Large ribosomal subunit protein bL36 of Halorhodospira halophila (strain DSM 244 / SL1) (Ectothiorhodospira halophila (strain DSM 244 / SL1)).